A 145-amino-acid polypeptide reads, in one-letter code: MRSEKHLLPLPLLLAICCLGTLHLSSGFPQSVPSYLEGLDIPESERHAFCFSQWTALQDQEQIPSFVMDLCSSIYNRMKVNEENNHEIYKRFLFQFSRAKDPSLKIGESQIATAEYTKRDSSGIVGRPFFLFRPRNGRKVSINEH.

An N-terminal signal peptide occupies residues methionine 1 to glycine 27. Propeptides lie at residues phenylalanine 28–tyrosine 89 and phenylalanine 92–threonine 117. Position 136 is an asparagine amide (asparagine 136). Residues valine 140–histidine 145 constitute a propeptide that is removed on maturation.

It belongs to the NmU family. In terms of tissue distribution, expressed by the skin glands.

The protein localises to the secreted. In terms of biological role, stimulates uterine smooth muscle contraction (EC(50)=1.6 nM). Synthetic peptide NmS-17 induces calcium mobilization in CHO cells transfected with either human FM-3/GPR66 (EC(50)=0.085 nM) or FM-4/TGR-1 (EC(50)=0.231 nM) NmU/NmS receptors. This chain is Neuromedin-S (nms), found in Bombina maxima (Giant fire-bellied toad).